An 854-amino-acid chain; its full sequence is uncharacterized protein (854 aa).

Belongs to the PEP-utilizing enzyme family.

This is an uncharacterized protein from Mycobacterium tuberculosis (strain CDC 1551 / Oshkosh).